We begin with the raw amino-acid sequence, 251 residues long: Probable inactive cytidine deaminase 4 (251 aa).

Substrate is bound at residue Asn61–Glu63. Catalysis depends on Glu76, which acts as the Proton donor. Residues Glu136 to Asn251 form the CMP/dCMP-type deaminase domain.

It belongs to the cytidine and deoxycytidylate deaminase family. As to quaternary structure, homodimer.

This is Probable inactive cytidine deaminase 4 (CDA4) from Arabidopsis thaliana (Mouse-ear cress).